Here is a 413-residue protein sequence, read N- to C-terminus: Alpha-1-antitrypsin-like protein CM55-MS (413 aa).

The first 24 residues, 1-24 (MPSSISWGLLLLAALSCLGPGSLA), serve as a signal peptide directing secretion. Q25 is modified (pyrrolidone carboxylic acid). N65, N102, N165, and N266 each carry an N-linked (GlcNAc...) asparagine glycan. The tract at residues 368–387 (GATVGGITFMSRPKEVIFDR) is RCL.

Belongs to the serpin family. Expressed in liver.

Its subcellular location is the secreted. Functionally, serine protease inhibitor. The polypeptide is Alpha-1-antitrypsin-like protein CM55-MS (Tamias sibiricus (Siberian chipmunk)).